We begin with the raw amino-acid sequence, 122 residues long: Large ribosomal subunit protein uL14 (122 aa).

The protein belongs to the universal ribosomal protein uL14 family. Part of the 50S ribosomal subunit. Forms a cluster with proteins L3 and L19. In the 70S ribosome, L14 and L19 interact and together make contacts with the 16S rRNA in bridges B5 and B8.

Its function is as follows. Binds to 23S rRNA. Forms part of two intersubunit bridges in the 70S ribosome. This chain is Large ribosomal subunit protein uL14, found in Latilactobacillus sakei subsp. sakei (strain 23K) (Lactobacillus sakei subsp. sakei).